The following is a 110-amino-acid chain: Protein RnfH (110 aa).

The segment at 86–110 (RQRRVEKTRKAGSIEGRRWQNKDSR) is disordered. Positions 100–110 (EGRRWQNKDSR) are enriched in basic and acidic residues.

Belongs to the UPF0125 (RnfH) family.

In Paraburkholderia xenovorans (strain LB400), this protein is Protein RnfH.